A 414-amino-acid polypeptide reads, in one-letter code: L-cysteine:1D-myo-inositol 2-amino-2-deoxy-alpha-D-glucopyranoside ligase (414 aa).

Cysteine 44 serves as a coordination point for Zn(2+). L-cysteinyl-5'-AMP contacts are provided by residues 44 to 47 (CGIT), threonine 59, and 82 to 84 (NIT). The 'HIGH' region motif lies at 46-56 (ITPYDSTHLGH). Positions 188–193 (ERGGDP) match the 'ERGGDP' region motif. Tryptophan 228 lines the L-cysteinyl-5'-AMP pocket. A Zn(2+)-binding site is contributed by cysteine 232. 250–252 (GSD) is a binding site for L-cysteinyl-5'-AMP. Histidine 257 contacts Zn(2+). Position 284 (isoleucine 284) interacts with L-cysteinyl-5'-AMP. Positions 290 to 294 (KMSKS) match the 'KMSKS' region motif.

The protein belongs to the class-I aminoacyl-tRNA synthetase family. MshC subfamily. Monomer. Zn(2+) is required as a cofactor.

It carries out the reaction 1D-myo-inositol 2-amino-2-deoxy-alpha-D-glucopyranoside + L-cysteine + ATP = 1D-myo-inositol 2-(L-cysteinylamino)-2-deoxy-alpha-D-glucopyranoside + AMP + diphosphate + H(+). Its function is as follows. Catalyzes the ATP-dependent condensation of GlcN-Ins and L-cysteine to form L-Cys-GlcN-Ins. This is L-cysteine:1D-myo-inositol 2-amino-2-deoxy-alpha-D-glucopyranoside ligase from Corynebacterium aurimucosum (strain ATCC 700975 / DSM 44827 / CIP 107346 / CN-1) (Corynebacterium nigricans).